We begin with the raw amino-acid sequence, 623 residues long: Glutamine--fructose-6-phosphate aminotransferase [isomerizing] (623 aa).

Cysteine 2 functions as the Nucleophile; for GATase activity in the catalytic mechanism. The Glutamine amidotransferase type-2 domain occupies 2-228; sequence CGIVGYIGQA…NDQVVTITAD (227 aa). 2 SIS domains span residues 295-435 and 468-613; these read IDES…LRGN and LGRS…VDQP. Residue lysine 618 is the For Fru-6P isomerization activity of the active site.

Homodimer.

Its subcellular location is the cytoplasm. The enzyme catalyses D-fructose 6-phosphate + L-glutamine = D-glucosamine 6-phosphate + L-glutamate. In terms of biological role, catalyzes the first step in hexosamine metabolism, converting fructose-6P into glucosamine-6P using glutamine as a nitrogen source. This Corynebacterium efficiens (strain DSM 44549 / YS-314 / AJ 12310 / JCM 11189 / NBRC 100395) protein is Glutamine--fructose-6-phosphate aminotransferase [isomerizing].